A 412-amino-acid chain; its full sequence is COP9 signalosome complex subunit 4 (412 aa).

In terms of domain architecture, PCI spans 216–378 (EAAQRYYELS…GILHFEDSNP (163 aa)).

The protein belongs to the CSN4 family. As to quaternary structure, component of the CSN complex, probably composed of csn-1, csn-2, csn-3, csn-4, csn-5, csn-6 and csn-7. Within the complex it probably interacts directly with csn-2 and csn-4. In the complex, it probably interacts directly with csn-1, csn-2, csn-3 and csn-6. Interacts with itself.

The protein resides in the cytoplasm. It is found in the nucleus. Component of the COP9 signalosome complex (CSN), a complex involved in various cellular and developmental processes. The CSN complex is an essential regulator of the ubiquitin (Ubl) conjugation pathway by mediating the deneddylation of the cullin subunits of the SCF-type E3 ligase complexes, leading to decrease the Ubl ligase activity of SCF. The CSN complex plays an essential role in embryogenesis and oogenesis and is required to regulate microtubule stability in the early embryo. Mediates mei-3/katanin targeting for degradation at the meiosis to mitosis transition via deneddylation of cul-3. This Caenorhabditis elegans protein is COP9 signalosome complex subunit 4 (csn-4).